Consider the following 312-residue polypeptide: Deoxyribonuclease Tat-D (312 aa).

Glu-124, His-161, His-187, and Asp-235 together coordinate a divalent metal cation.

The protein belongs to the metallo-dependent hydrolases superfamily. TatD-type hydrolase family. A divalent metal cation is required as a cofactor.

Its subcellular location is the cytoplasm. It is found in the nucleus. Functionally, has both endo- and exonuclease activities. Incises double-stranded DNA without obvious specificity via its endonuclease activity and excises the DNA from the 3'-to 5'-end by its exonuclease activity. May have a role in apoptosis. This is Deoxyribonuclease Tat-D from Schizosaccharomyces pombe (strain 972 / ATCC 24843) (Fission yeast).